A 339-amino-acid chain; its full sequence is 4-hydroxy-2-oxovalerate aldolase 3 (339 aa).

Positions 7-259 (IRVTDTSLRD…KTGIDFFAIA (253 aa)) constitute a Pyruvate carboxyltransferase domain. 15–16 (RD) is a binding site for substrate. Asp16 contributes to the Mn(2+) binding site. Catalysis depends on His19, which acts as the Proton acceptor. 2 residues coordinate substrate: Ser169 and His198. The Mn(2+) site is built by His198 and His200. Residue Tyr289 coordinates substrate.

The protein belongs to the 4-hydroxy-2-oxovalerate aldolase family.

The catalysed reaction is (S)-4-hydroxy-2-oxopentanoate = acetaldehyde + pyruvate. This Rhodococcus opacus (strain B4) protein is 4-hydroxy-2-oxovalerate aldolase 3.